The following is a 439-amino-acid chain: Glucose-1-phosphate adenylyltransferase (439 aa).

Alpha-D-glucose 1-phosphate contacts are provided by residues glycine 172, 187 to 188 (EK), and serine 219.

This sequence belongs to the bacterial/plant glucose-1-phosphate adenylyltransferase family. As to quaternary structure, homotetramer.

The catalysed reaction is alpha-D-glucose 1-phosphate + ATP + H(+) = ADP-alpha-D-glucose + diphosphate. It functions in the pathway glycan biosynthesis; glycogen biosynthesis. Involved in the biosynthesis of ADP-glucose, a building block required for the elongation reactions to produce glycogen. Catalyzes the reaction between ATP and alpha-D-glucose 1-phosphate (G1P) to produce pyrophosphate and ADP-Glc. This Synechocystis sp. (strain ATCC 27184 / PCC 6803 / Kazusa) protein is Glucose-1-phosphate adenylyltransferase.